A 218-amino-acid chain; its full sequence is Peptide methionine sulfoxide reductase MsrA (218 aa).

The active site involves Cys-57.

Belongs to the MsrA Met sulfoxide reductase family.

It carries out the reaction L-methionyl-[protein] + [thioredoxin]-disulfide + H2O = L-methionyl-(S)-S-oxide-[protein] + [thioredoxin]-dithiol. The enzyme catalyses [thioredoxin]-disulfide + L-methionine + H2O = L-methionine (S)-S-oxide + [thioredoxin]-dithiol. Its function is as follows. Has an important function as a repair enzyme for proteins that have been inactivated by oxidation. Catalyzes the reversible oxidation-reduction of methionine sulfoxide in proteins to methionine. This chain is Peptide methionine sulfoxide reductase MsrA, found in Brucella anthropi (Ochrobactrum anthropi).